Reading from the N-terminus, the 326-residue chain is Glutamine synthetase (326 aa).

A GS beta-grasp domain is found at 4–85 (FKLEYIWLDG…VMCEVMMPDG (82 aa)). Residues 83–326 (PDGHAHASNA…GDPYQIVRRF (244 aa)) form the GS catalytic domain. Residues glutamate 107 and glutamate 109 each contribute to the Mg(2+) site. An ATP-binding site is contributed by glutamate 164. Residues glutamate 169 and glutamate 176 each contribute to the Mg(2+) site. L-glutamate is bound at residue glutamate 275.

This sequence belongs to the glutamine synthetase family. As to quaternary structure, homooctamer and homotetramer. The cofactor is Mg(2+).

It localises to the cytoplasm. It carries out the reaction L-glutamate + NH4(+) + ATP = L-glutamine + ADP + phosphate + H(+). Transferase activity is inhibited by NH(4)Cl. Its function is as follows. Catalyzes the ATP-dependent biosynthesis of glutamine from glutamate and ammonia. The chain is Glutamine synthetase from Rhizobium leguminosarum bv. phaseoli.